The sequence spans 88 residues: Antitoxin VapB3 (88 aa).

Antitoxin component of a type II toxin-antitoxin (TA) system. This is Antitoxin VapB3 (vapB3) from Mycobacterium tuberculosis (strain CDC 1551 / Oshkosh).